Reading from the N-terminus, the 868-residue chain is Facilitated trehalose transporter Tret1 (868 aa).

Disordered stretches follow at residues 1–213 (MSGR…QKAT) and 257–314 (KESS…LIHR). At 1 to 403 (MSGRDNRGAG…VYRPTTNPIY (403 aa)) the chain is on the cytoplasmic side. The span at 25–43 (KLKEKLTRAGDDQGYHRVE) shows a compositional bias: basic and acidic residues. Composition is skewed to low complexity over residues 44-57 (SNLS…SLDT), 79-91 (PQQQ…QQLR), and 117-126 (PFQQQQQRTP). Basic and acidic residues-rich tracts occupy residues 146–155 (EIREHRDRQQ) and 257–290 (KESS…KLDK). 5 positions are modified to phosphoserine: S259, S260, S261, S331, and S333. The interval 335-367 (EDFHTSRQHFQQQRSISTDSRKSRRPYEMDEMG) is disordered. Polar residues predominate over residues 342–352 (QHFQQQRSIST). Residues 353 to 367 (DSRKSRRPYEMDEMG) are compositionally biased toward basic and acidic residues. A helical transmembrane segment spans residues 404-424 (IWTQVLAALSVSLGSLVVGFV). Residues 425–451 (SAYTSPALVSMTNRNMTSFEVTPQAAS) are Extracellular-facing. A glycan (N-linked (GlcNAc...) asparagine) is linked at N439. A helical membrane pass occupies residues 452 to 472 (WVGGIMPLAGLAGGIAGGPFI). The Cytoplasmic portion of the chain corresponds to 473 to 484 (EYLGRRNTILAT). The helical transmembrane segment at 485–505 (AIPFIVSSLLIACAVNVAMVL) threads the bilayer. The Extracellular portion of the chain corresponds to 506–508 (AGR). The chain crosses the membrane as a helical span at residues 509–529 (FLAGFCVGIASLSLPVYLGET). Topologically, residues 530-535 (VQPEVR) are cytoplasmic. Residues 536-556 (GTLGLLPTAFGNIGILLCFVA) form a helical membrane-spanning segment. The Extracellular segment spans residues 557–563 (GTYMDWS). A helical transmembrane segment spans residues 564 to 584 (MLAFLGAALPVPFLILMFLIP). Residues 585-653 (ETPRWFVSRG…NLKPLSISLG (69 aa)) are Cytoplasmic-facing. Residues 654–674 (LMFFQQLSGINAVIFYTVSIF) form a helical membrane-spanning segment. Topologically, residues 675 to 684 (KDAGSTIDGN) are extracellular. A helical membrane pass occupies residues 685–705 (LCTIIVGIVNFMATFIATLLI). Residues 706–711 (DRAGRK) lie on the Cytoplasmic side of the membrane. The chain crosses the membrane as a helical span at residues 712–732 (ILLYVSNIAMIITLFVLGGFF). Over 733–751 (YCKSHGQDVSQLGWLPLSC) the chain is Extracellular. The helical transmembrane segment at 752–772 (FVIYILGFSLGFGPIPWLMMG) threads the bilayer. Residues 773–778 (EILPSK) lie on the Cytoplasmic side of the membrane. Residues 779 to 799 (IRGSAASVATAFNWSCTFVVT) form a helical membrane-spanning segment. Residues 800-812 (KTFQDMIDFMGAH) lie on the Extracellular side of the membrane. A helical membrane pass occupies residues 813–833 (GAFWLFGSICFIGLFFVILYV). Residues 834-868 (PETQGKTLEDIERKMMGRVRRMSSVANMKPLAFNM) are Cytoplasmic-facing. A phosphoserine mark is found at S856 and S857.

It belongs to the major facilitator superfamily. Sugar transporter (TC 2.A.1.1) family. Trehalose transporter subfamily.

The protein localises to the cell membrane. Low-capacity facilitative transporter for trehalose. Does not transport maltose, sucrose or lactose. Mediates the bidirectional transfer of trehalose. Responsible for the transport of trehalose synthesized in the fat body and the incorporation of trehalose into other tissues that require a carbon source, thereby regulating trehalose levels in the hemolymph. This chain is Facilitated trehalose transporter Tret1, found in Drosophila pseudoobscura pseudoobscura (Fruit fly).